Reading from the N-terminus, the 249-residue chain is Probable transcriptional regulatory protein GOX1679 (249 aa).

This sequence belongs to the TACO1 family.

The protein resides in the cytoplasm. This chain is Probable transcriptional regulatory protein GOX1679, found in Gluconobacter oxydans (strain 621H) (Gluconobacter suboxydans).